The primary structure comprises 667 residues: Bifunctional polymyxin resistance protein ArnA (667 aa).

Positions 1-304 (MKAIVFAYHD…EMGIVTDVRL (304 aa)) are formyltransferase ArnAFT. Catalysis depends on histidine 104, which acts as the Proton donor; for formyltransferase activity. Residues arginine 114 and 136 to 140 (VKKAD) contribute to the (6R)-10-formyltetrahydrofolate site. A dehydrogenase ArnADH region spans residues 314–667 (RRTRVLILGV…TAAPKDELNA (354 aa)). NAD(+)-binding positions include aspartate 347 and 368–369 (DI). UDP-alpha-D-glucuronate-binding positions include alanine 393, tyrosine 398, and 432-433 (TS). Glutamate 434 functions as the Proton acceptor; for decarboxylase activity in the catalytic mechanism. UDP-alpha-D-glucuronate is bound by residues arginine 460, asparagine 492, 526–535 (KLVDGGAQKR), and tyrosine 613. The active-site Proton donor; for decarboxylase activity is arginine 619.

It in the N-terminal section; belongs to the Fmt family. UDP-L-Ara4N formyltransferase subfamily. In the C-terminal section; belongs to the NAD(P)-dependent epimerase/dehydratase family. UDP-glucuronic acid decarboxylase subfamily. As to quaternary structure, homohexamer, formed by a dimer of trimers.

It catalyses the reaction UDP-alpha-D-glucuronate + NAD(+) = UDP-beta-L-threo-pentopyranos-4-ulose + CO2 + NADH. The catalysed reaction is UDP-4-amino-4-deoxy-beta-L-arabinose + (6R)-10-formyltetrahydrofolate = UDP-4-deoxy-4-formamido-beta-L-arabinose + (6S)-5,6,7,8-tetrahydrofolate + H(+). The protein operates within nucleotide-sugar biosynthesis; UDP-4-deoxy-4-formamido-beta-L-arabinose biosynthesis; UDP-4-deoxy-4-formamido-beta-L-arabinose from UDP-alpha-D-glucuronate: step 1/3. It functions in the pathway nucleotide-sugar biosynthesis; UDP-4-deoxy-4-formamido-beta-L-arabinose biosynthesis; UDP-4-deoxy-4-formamido-beta-L-arabinose from UDP-alpha-D-glucuronate: step 3/3. Its pathway is bacterial outer membrane biogenesis; lipopolysaccharide biosynthesis. In terms of biological role, bifunctional enzyme that catalyzes the oxidative decarboxylation of UDP-glucuronic acid (UDP-GlcUA) to UDP-4-keto-arabinose (UDP-Ara4O) and the addition of a formyl group to UDP-4-amino-4-deoxy-L-arabinose (UDP-L-Ara4N) to form UDP-L-4-formamido-arabinose (UDP-L-Ara4FN). The modified arabinose is attached to lipid A and is required for resistance to polymyxin and cationic antimicrobial peptides. This chain is Bifunctional polymyxin resistance protein ArnA, found in Yersinia pestis bv. Antiqua (strain Antiqua).